A 626-amino-acid polypeptide reads, in one-letter code: 1-deoxy-D-xylulose-5-phosphate synthase 2 (626 aa).

Thiamine diphosphate is bound by residues histidine 74 and 115-117; that span reads GHA. Residue aspartate 146 coordinates Mg(2+). Thiamine diphosphate is bound by residues 147-148, asparagine 175, phenylalanine 286, and glutamate 368; that span reads GS. Asparagine 175 lines the Mg(2+) pocket.

It belongs to the transketolase family. DXPS subfamily. In terms of assembly, homodimer. Requires Mg(2+) as cofactor. Thiamine diphosphate serves as cofactor.

The catalysed reaction is D-glyceraldehyde 3-phosphate + pyruvate + H(+) = 1-deoxy-D-xylulose 5-phosphate + CO2. It participates in metabolic intermediate biosynthesis; 1-deoxy-D-xylulose 5-phosphate biosynthesis; 1-deoxy-D-xylulose 5-phosphate from D-glyceraldehyde 3-phosphate and pyruvate: step 1/1. Its function is as follows. Catalyzes the acyloin condensation reaction between C atoms 2 and 3 of pyruvate and glyceraldehyde 3-phosphate to yield 1-deoxy-D-xylulose-5-phosphate (DXP). The chain is 1-deoxy-D-xylulose-5-phosphate synthase 2 from Geobacter sulfurreducens (strain ATCC 51573 / DSM 12127 / PCA).